Reading from the N-terminus, the 45-residue chain is NLR family pyrin domain-containing protein 2B (45 aa).

In terms of tissue distribution, expressed in all tissues tested, including spleen, lymph node, thymus, tonsil, peripheral blood leukocyte, bone marrow, liver, heart, brain, placenta, lung, skeletal muscle, kidney and pancreas.

The protein localises to the cytoplasm. The protein resides in the nucleus. Its function is as follows. May function as a negative regulator of NF-kappa-B by preventing RELA/p65 phosphorylation at 'Ser-536', thereby inhibiting its transcriptional activity. Through NF-kappa-B regulation may control cytokine release upon Toll-like receptors activation and therefore play a role in modulation of innate immunity. May also play a role in cell cycle progression and apoptotic process. The sequence is that of NLR family pyrin domain-containing protein 2B from Homo sapiens (Human).